A 179-amino-acid polypeptide reads, in one-letter code: Putative ankyrin repeat protein RF_0922 (179 aa).

ANK repeat units follow at residues 5-34 (KGCTALTWAVDKGLEKVCEILIPNMSEQAI), 40-72 (NGSTALTLAAWKGLEKICRLLIPKMSPQAINHV), 75-104 (NGNTALTLAAWKGLEKICELLIPKMSSQAI), 110-139 (NGDTALTLAAWKGLEKICEMLIPKMSEQAI), and 145-174 (NGNTALTLAADKSLEKICEMLIPKMSKQAI).

This Rickettsia felis (strain ATCC VR-1525 / URRWXCal2) (Rickettsia azadi) protein is Putative ankyrin repeat protein RF_0922.